A 260-amino-acid chain; its full sequence is E3 ubiquitin-protein ligase SRFP1 (260 aa).

Residues 11–80 form a CHY-type zinc finger; sequence FGRMGFGCKH…VAQVCYNCGV (70 aa). Zn(2+) is bound by residues Cys18, His20, Cys31, Cys32, Cys38, Cys41, His42, His50, Cys62, Cys65, Cys75, Cys78, Cys87, Cys90, His103, Cys104, Cys107, Cys110, His120, Cys121, Cys124, Cys127, His136, and Cys138. A CTCHY-type zinc finger spans residues 82–146; the sequence is MGEYFCSACK…CCIENSMKNN (65 aa). The segment at 147 to 190 adopts an RING-type; atypical zinc-finger fold; it reads CPICYEYLFDSLRETSVLRCGHTMHLQCFHEMLKHDKFSCPICS.

Expressed in roots, leaves, nodes and panicles.

Its subcellular location is the nucleus. The protein localises to the cytoplasm. It catalyses the reaction S-ubiquitinyl-[E2 ubiquitin-conjugating enzyme]-L-cysteine + [acceptor protein]-L-lysine = [E2 ubiquitin-conjugating enzyme]-L-cysteine + N(6)-ubiquitinyl-[acceptor protein]-L-lysine.. The protein operates within protein modification; protein ubiquitination. Functionally, possesses E3 ubiquitin-protein ligase activity in vitro. Possesses transactivation activity in yeast cells. May modulate abiotic stress responses by negatively regulating antioxidant enzymes-mediated reactive oxygen species (ROS) removal. The protein is E3 ubiquitin-protein ligase SRFP1 of Oryza sativa subsp. japonica (Rice).